The sequence spans 424 residues: Glutamyl-tRNA reductase (424 aa).

Residues 53–56, Ser111, 116–118, and Gln122 contribute to the substrate site; these read TCNR and EPQ. Residue Cys54 is the Nucleophile of the active site. 191–196 is an NADP(+) binding site; it reads GAGEMI.

Belongs to the glutamyl-tRNA reductase family. In terms of assembly, homodimer.

It carries out the reaction (S)-4-amino-5-oxopentanoate + tRNA(Glu) + NADP(+) = L-glutamyl-tRNA(Glu) + NADPH + H(+). It participates in porphyrin-containing compound metabolism; protoporphyrin-IX biosynthesis; 5-aminolevulinate from L-glutamyl-tRNA(Glu): step 1/2. Its function is as follows. Catalyzes the NADPH-dependent reduction of glutamyl-tRNA(Glu) to glutamate 1-semialdehyde (GSA). In Bordetella bronchiseptica (strain ATCC BAA-588 / NCTC 13252 / RB50) (Alcaligenes bronchisepticus), this protein is Glutamyl-tRNA reductase.